Consider the following 179-residue polypeptide: Large ribosomal subunit protein uL5 (179 aa).

Belongs to the universal ribosomal protein uL5 family. As to quaternary structure, part of the 50S ribosomal subunit; part of the 5S rRNA/L5/L18/L25 subcomplex. Contacts the 5S rRNA and the P site tRNA. Forms a bridge to the 30S subunit in the 70S ribosome.

Its function is as follows. This is one of the proteins that bind and probably mediate the attachment of the 5S RNA into the large ribosomal subunit, where it forms part of the central protuberance. In the 70S ribosome it contacts protein S13 of the 30S subunit (bridge B1b), connecting the 2 subunits; this bridge is implicated in subunit movement. Contacts the P site tRNA; the 5S rRNA and some of its associated proteins might help stabilize positioning of ribosome-bound tRNAs. This is Large ribosomal subunit protein uL5 from Microcystis aeruginosa (strain NIES-843 / IAM M-2473).